Here is a 183-residue protein sequence, read N- to C-terminus: Apo-citrate lyase phosphoribosyl-dephospho-CoA transferase (183 aa).

Belongs to the CitX family.

It carries out the reaction apo-[citrate lyase ACP] + 2'-(5''-triphospho-alpha-D-ribosyl)-3'-dephospho-CoA = holo-[citrate lyase ACP] + diphosphate. Functionally, transfers 2-(5''-triphosphoribosyl)-3'-dephosphocoenzyme-A on a serine residue to the apo-acyl carrier protein (gamma chain) of the citrate lyase to yield holo-acyl carrier protein. The protein is Apo-citrate lyase phosphoribosyl-dephospho-CoA transferase of Escherichia coli (strain SMS-3-5 / SECEC).